The primary structure comprises 620 residues: 1-deoxy-D-xylulose-5-phosphate synthase (620 aa).

Thiamine diphosphate contacts are provided by residues histidine 80 and 121 to 123 (GHS). Aspartate 152 is a binding site for Mg(2+). Thiamine diphosphate is bound by residues 153-154 (GA), asparagine 181, tyrosine 288, and glutamate 370. Asparagine 181 contacts Mg(2+).

The protein belongs to the transketolase family. DXPS subfamily. In terms of assembly, homodimer. Mg(2+) serves as cofactor. Thiamine diphosphate is required as a cofactor.

The enzyme catalyses D-glyceraldehyde 3-phosphate + pyruvate + H(+) = 1-deoxy-D-xylulose 5-phosphate + CO2. It participates in metabolic intermediate biosynthesis; 1-deoxy-D-xylulose 5-phosphate biosynthesis; 1-deoxy-D-xylulose 5-phosphate from D-glyceraldehyde 3-phosphate and pyruvate: step 1/1. Functionally, catalyzes the acyloin condensation reaction between C atoms 2 and 3 of pyruvate and glyceraldehyde 3-phosphate to yield 1-deoxy-D-xylulose-5-phosphate (DXP). This chain is 1-deoxy-D-xylulose-5-phosphate synthase, found in Sodalis glossinidius (strain morsitans).